A 607-amino-acid polypeptide reads, in one-letter code: Arginine decarboxylase (607 aa).

N6-(pyridoxal phosphate)lysine is present on K104. Position 290–300 (290–300 (LDCGGGLGVDY)) interacts with substrate.

This sequence belongs to the Orn/Lys/Arg decarboxylase class-II family. SpeA subfamily. Requires pyridoxal 5'-phosphate as cofactor. The cofactor is Mg(2+).

It catalyses the reaction L-arginine + H(+) = agmatine + CO2. Its pathway is amine and polyamine biosynthesis; agmatine biosynthesis; agmatine from L-arginine: step 1/1. The protein is Arginine decarboxylase (SPE1) of Avena sativa (Oat).